The primary structure comprises 179 residues: MAKLHDYYKDEVVKKLMTEFNYNSVMQVPRVEKITLNMGVGEAIADKKLLDNAAADLTAISGQKPLITKARKSVAGFKIRQGYPIGCKVTLRGERMWEFFERLITIAVPRIRDFRGLSAKSFDGRGNYSMGVREQIIFPEIDYDKVDRVRGLDITITTTAKSDEEGRALLAAFDFPFRK.

It belongs to the universal ribosomal protein uL5 family. In terms of assembly, part of the 50S ribosomal subunit; part of the 5S rRNA/L5/L18/L25 subcomplex. Contacts the 5S rRNA and the P site tRNA. Forms a bridge to the 30S subunit in the 70S ribosome.

Functionally, this is one of the proteins that bind and probably mediate the attachment of the 5S RNA into the large ribosomal subunit, where it forms part of the central protuberance. In the 70S ribosome it contacts protein S13 of the 30S subunit (bridge B1b), connecting the 2 subunits; this bridge is implicated in subunit movement. Contacts the P site tRNA; the 5S rRNA and some of its associated proteins might help stabilize positioning of ribosome-bound tRNAs. The chain is Large ribosomal subunit protein uL5 from Salmonella arizonae (strain ATCC BAA-731 / CDC346-86 / RSK2980).